We begin with the raw amino-acid sequence, 66 residues long: Large ribosomal subunit protein bL33c (66 aa).

Belongs to the bacterial ribosomal protein bL33 family.

The protein resides in the plastid. Its subcellular location is the chloroplast. The protein is Large ribosomal subunit protein bL33c of Saccharum officinarum (Sugarcane).